A 172-amino-acid chain; its full sequence is Adenine phosphoribosyltransferase (172 aa).

Belongs to the purine/pyrimidine phosphoribosyltransferase family. In terms of assembly, homodimer.

Its subcellular location is the cytoplasm. The catalysed reaction is AMP + diphosphate = 5-phospho-alpha-D-ribose 1-diphosphate + adenine. It participates in purine metabolism; AMP biosynthesis via salvage pathway; AMP from adenine: step 1/1. Functionally, catalyzes a salvage reaction resulting in the formation of AMP, that is energically less costly than de novo synthesis. This chain is Adenine phosphoribosyltransferase, found in Parasynechococcus marenigrum (strain WH8102).